Reading from the N-terminus, the 39-residue chain is Natriuretic peptide CnNP-b (39 aa).

The propeptide occupies 1-8 (SGSKTATK). C12 and C28 are oxidised to a cystine. Residues 20–39 (IGSTSGMGCGGVPKPTPGGS) form a disordered region.

It belongs to the natriuretic peptide family. In terms of tissue distribution, expressed by the venom gland.

The protein resides in the secreted. In terms of biological role, snake venom natriuretic peptide that targets both NPR1 and NPR2. Exhibits hypotensive and vasodepressor activities. This chain is Natriuretic peptide CnNP-b, found in Cryptophis nigrescens (Eastern small-eyed snake).